The sequence spans 379 residues: Glucose-1-phosphate adenylyltransferase (379 aa).

Residues G164, 179-180 (EK), and S190 each bind alpha-D-glucose 1-phosphate.

Belongs to the bacterial/plant glucose-1-phosphate adenylyltransferase family. As to quaternary structure, homotetramer.

The catalysed reaction is alpha-D-glucose 1-phosphate + ATP + H(+) = ADP-alpha-D-glucose + diphosphate. Its pathway is glycan biosynthesis; glycogen biosynthesis. Its function is as follows. Involved in the biosynthesis of ADP-glucose, a building block required for the elongation reactions to produce glycogen. Catalyzes the reaction between ATP and alpha-D-glucose 1-phosphate (G1P) to produce pyrophosphate and ADP-Glc. The chain is Glucose-1-phosphate adenylyltransferase from Lactiplantibacillus plantarum (strain ATCC BAA-793 / NCIMB 8826 / WCFS1) (Lactobacillus plantarum).